The sequence spans 457 residues: Argininosuccinate lyase (457 aa).

Belongs to the lyase 1 family. Argininosuccinate lyase subfamily.

It localises to the cytoplasm. It catalyses the reaction 2-(N(omega)-L-arginino)succinate = fumarate + L-arginine. It functions in the pathway amino-acid biosynthesis; L-arginine biosynthesis; L-arginine from L-ornithine and carbamoyl phosphate: step 3/3. This Yersinia pseudotuberculosis serotype O:1b (strain IP 31758) protein is Argininosuccinate lyase.